Reading from the N-terminus, the 282-residue chain is Anamorsin homolog (282 aa).

Residues 5 to 151 (VDTNNFVLLL…EVGAKTALSL (147 aa)) are N-terminal SAM-like domain. The tract at residues 152 to 196 (SFAPKPAQPKAETSAAQIWTLSAQDIDDEDVDLLDSDTLLDEDDL) is linker. [2Fe-2S] cluster contacts are provided by cysteine 208, cysteine 218, cysteine 221, and cysteine 223. The fe-S binding site A stretch occupies residues 208–223 (CGPGSGKKKACKNCTC). Residues cysteine 243, cysteine 246, cysteine 254, and cysteine 257 each contribute to the [4Fe-4S] cluster site. 2 short sequence motifs (cx2C motif) span residues 243-246 (CGSC) and 254-257 (CSTC). The segment at 243–257 (CGSCYLGDAFRCSTC) is fe-S binding site B.

This sequence belongs to the anamorsin family. As to quaternary structure, monomer. Requires [2Fe-2S] cluster as cofactor. [4Fe-4S] cluster serves as cofactor.

The protein resides in the cytoplasm. It localises to the mitochondrion intermembrane space. Component of the cytosolic iron-sulfur (Fe-S) protein assembly (CIA) machinery. Required for the maturation of extramitochondrial Fe-S proteins. Part of an electron transfer chain functioning in an early step of cytosolic Fe-S biogenesis, facilitating the de novo assembly of a [4Fe-4S] cluster on the cytosolic Fe-S scaffold complex. Electrons are transferred from NADPH via a FAD- and FMN-containing diflavin oxidoreductase. Together with the diflavin oxidoreductase, also required for the assembly of the diferric tyrosyl radical cofactor of ribonucleotide reductase (RNR), probably by providing electrons for reduction during radical cofactor maturation in the catalytic small subunit. In Nematostella vectensis (Starlet sea anemone), this protein is Anamorsin homolog.